Consider the following 287-residue polypeptide: F420-non-reducing hydrogenase vhu subunit G (287 aa).

This sequence belongs to the [NiFe]/[NiFeSe] hydrogenase small subunit family. The F420-non-reducing hydrogenase vhu is composed of four subunits; VhuA, VhuD, VhuG and VhuU.

The chain is F420-non-reducing hydrogenase vhu subunit G (vhuG) from Methanococcus voltae.